The primary structure comprises 352 residues: Protein-glutamate methylesterase/protein-glutamine glutaminase 2 (352 aa).

One can recognise a Response regulatory domain in the interval 1–116; sequence MIVDDSAIVR…KDFIQDAASD (116 aa). 4-aspartylphosphate is present on Asp50. One can recognise a CheB-type methylesterase domain in the interval 159 to 351; sequence SKTTEHVVAI…QEIMRYAHLK (193 aa). Active-site residues include Ser171, His197, and Asp293.

This sequence belongs to the CheB family. Post-translationally, phosphorylated by CheA. Phosphorylation of the N-terminal regulatory domain activates the methylesterase activity.

Its subcellular location is the cytoplasm. The catalysed reaction is [protein]-L-glutamate 5-O-methyl ester + H2O = L-glutamyl-[protein] + methanol + H(+). It carries out the reaction L-glutaminyl-[protein] + H2O = L-glutamyl-[protein] + NH4(+). In terms of biological role, involved in chemotaxis. Part of a chemotaxis signal transduction system that modulates chemotaxis in response to various stimuli. Catalyzes the demethylation of specific methylglutamate residues introduced into the chemoreceptors (methyl-accepting chemotaxis proteins or MCP) by CheR. Also mediates the irreversible deamidation of specific glutamine residues to glutamic acid. This Shewanella denitrificans (strain OS217 / ATCC BAA-1090 / DSM 15013) protein is Protein-glutamate methylesterase/protein-glutamine glutaminase 2.